A 145-amino-acid chain; its full sequence is Cell wall teichoic acid glycosylation protein GtcA (145 aa).

The next 4 membrane-spanning stretches (helical) occupy residues 21-41 (IFMY…TFWL), 45-65 (ILNW…VLFA), 91-111 (FFGF…LLIS), and 122-142 (IWTN…IIFK).

This sequence belongs to the GtrA family.

It is found in the cell membrane. In terms of biological role, involved in the decoration of cell wall teichoic acid with galactose and glucose. The polypeptide is Cell wall teichoic acid glycosylation protein GtcA (gtcA) (Listeria monocytogenes).